Consider the following 71-residue polypeptide: Translational regulator CsrA (71 aa).

Positions arginine 50–glutamine 71 are disordered.

It belongs to the CsrA/RsmA family. Homodimer; the beta-strands of each monomer intercalate to form a hydrophobic core, while the alpha-helices form wings that extend away from the core.

It is found in the cytoplasm. Functionally, a key translational regulator that binds mRNA to regulate translation initiation and/or mRNA stability. Mediates global changes in gene expression, shifting from rapid growth to stress survival by linking envelope stress, the stringent response and the catabolite repression systems. Usually binds in the 5'-UTR; binding at or near the Shine-Dalgarno sequence prevents ribosome-binding, repressing translation, binding elsewhere in the 5'-UTR can activate translation and/or stabilize the mRNA. Its function is antagonized by small RNA(s). The chain is Translational regulator CsrA from Halorhodospira halophila (strain DSM 244 / SL1) (Ectothiorhodospira halophila (strain DSM 244 / SL1)).